Here is a 266-residue protein sequence, read N- to C-terminus: MICOS complex subunit MIC27 (266 aa).

A mitochondrion-targeting transit peptide spans 1–27 (MAAIRMGKLTTMPAGLIYASVSVHAAK). The Mitochondrial intermembrane segment spans residues 28–110 (EEESKKQLVK…YVYMKNPPRD (83 aa)). Residues 111-129 (FLPKMGVITVSGLAGLVSA) form a helical membrane-spanning segment. Residues 130–137 (RKGSKFKK) are Mitochondrial matrix-facing. The chain crosses the membrane as a helical span at residues 138 to 155 (ITYPLGLATLGATVCYPV). The Mitochondrial intermembrane segment spans residues 156-266 (QSVIIAKVTA…NVTNSGVLRI (111 aa)). A Phosphoserine modification is found at Ser-204.

It belongs to the apolipoprotein O/MICOS complex subunit Mic27 family. Component of the mitochondrial contact site and cristae organizing system (MICOS) complex, composed of at least MICOS10/MIC10, CHCHD3/MIC19, CHCHD6/MIC25, APOOL/MIC27, IMMT/MIC60, APOO/MIC23/MIC26 and MICOS13/MIC13. This complex was also known under the names MINOS or MitOS complex. The MICOS complex associates with mitochondrial outer membrane proteins SAMM50, MTX1 and MTX2 (together described as components of the mitochondrial outer membrane sorting assembly machinery (SAM) complex) and DNAJC11, mitochondrial inner membrane protein TMEM11 and with HSPA9. The MICOS and SAM complexes together with DNAJC11 are part of a large protein complex spanning both membranes termed the mitochondrial intermembrane space bridging (MIB) complex. Interacts with MICOS10/MIC10, IMMT/MIC60 and APOO/MIC23/MIC26.

It is found in the mitochondrion inner membrane. The protein resides in the mitochondrion. Functionally, component of the MICOS complex, a large protein complex of the mitochondrial inner membrane that plays crucial roles in the maintenance of crista junctions, inner membrane architecture, and formation of contact sites to the outer membrane. Specifically binds to cardiolipin (in vitro) but not to the precursor lipid phosphatidylglycerol. Plays a crucial role in crista junction formation and mitochondrial function. The chain is MICOS complex subunit MIC27 (APOOL) from Pongo abelii (Sumatran orangutan).